We begin with the raw amino-acid sequence, 860 residues long: DNA mismatch repair protein MutS (860 aa).

607 to 614 (GPNMSGKS) is a binding site for ATP.

It belongs to the DNA mismatch repair MutS family.

This protein is involved in the repair of mismatches in DNA. It is possible that it carries out the mismatch recognition step. This protein has a weak ATPase activity. This chain is DNA mismatch repair protein MutS, found in Listeria monocytogenes serotype 4a (strain HCC23).